Here is a 623-residue protein sequence, read N- to C-terminus: Glutathione import ATP-binding protein GsiA (623 aa).

2 consecutive ABC transporter domains span residues 15-269 and 314-564; these read VENL…RALL and LRVR…RKLL. Residues 49–56 and 357–364 each bind ATP; these read GESGSGKS.

Belongs to the ABC transporter superfamily. Glutathione importer (TC 3.A.1.5.11) family. In terms of assembly, the complex is composed of two ATP-binding proteins (GsiA), two transmembrane proteins (GsiC and GsiD) and a solute-binding protein (GsiB).

The protein localises to the cell inner membrane. The catalysed reaction is glutathione(out) + ATP + H2O = glutathione(in) + ADP + phosphate + H(+). Its function is as follows. Part of the ABC transporter complex GsiABCD involved in glutathione import. Responsible for energy coupling to the transport system. The polypeptide is Glutathione import ATP-binding protein GsiA (Escherichia coli O1:K1 / APEC).